Reading from the N-terminus, the 323-residue chain is Methionyl-tRNA formyltransferase (323 aa).

Position 118 to 121 (118 to 121 (SLLP)) interacts with (6S)-5,6,7,8-tetrahydrofolate.

The protein belongs to the Fmt family.

The enzyme catalyses L-methionyl-tRNA(fMet) + (6R)-10-formyltetrahydrofolate = N-formyl-L-methionyl-tRNA(fMet) + (6S)-5,6,7,8-tetrahydrofolate + H(+). Its function is as follows. Attaches a formyl group to the free amino group of methionyl-tRNA(fMet). The formyl group appears to play a dual role in the initiator identity of N-formylmethionyl-tRNA by promoting its recognition by IF2 and preventing the misappropriation of this tRNA by the elongation apparatus. This Buchnera aphidicola subsp. Baizongia pistaciae (strain Bp) protein is Methionyl-tRNA formyltransferase.